The chain runs to 457 residues: Transcription factor PCF7 (457 aa).

Residues 58-84 adopt a coiled-coil conformation; sequence STLHYLLQEKERAQQAHEQLQIYQQQQ. A disordered region spans residues 95–119; the sequence is RQPASRGPGGGGGGGDGGGSSGEST. The span at 101-115 shows a compositional bias: gly residues; sequence GPGGGGGGGDGGGSS. A TCP domain is found at 140 to 198; that stretch reads RKDRHSKVCTARGLRDRRVRLAAHTAIRFYDVQDRLGYDRPSKAVDWLMRNAKAAIDEL. Disordered stretches follow at residues 199–231 and 263–299; these read PDRA…GFGN and KSLF…SNQQ. 2 stretches are compositionally biased toward low complexity: residues 210 to 225 and 268 to 278; these read AAST…ATST and SSSTASGAASA.

Forms homodimers and heterodimers.

Its subcellular location is the nucleus. In terms of biological role, transcription activator. Binds the promoter core sequence 5'-GGNCC-3'. The sequence is that of Transcription factor PCF7 (PCF7) from Oryza sativa subsp. japonica (Rice).